The following is a 570-amino-acid chain: Formate--tetrahydrofolate ligase (570 aa).

Thr65–Thr72 serves as a coordination point for ATP.

The protein belongs to the formate--tetrahydrofolate ligase family.

The enzyme catalyses (6S)-5,6,7,8-tetrahydrofolate + formate + ATP = (6R)-10-formyltetrahydrofolate + ADP + phosphate. It functions in the pathway one-carbon metabolism; tetrahydrofolate interconversion. This chain is Formate--tetrahydrofolate ligase, found in Shewanella oneidensis (strain ATCC 700550 / JCM 31522 / CIP 106686 / LMG 19005 / NCIMB 14063 / MR-1).